We begin with the raw amino-acid sequence, 365 residues long: 3-isopropylmalate dehydrogenase (365 aa).

76-89 lines the NAD(+) pocket; sequence GPKWDQNPSELRPE. Substrate is bound by residues arginine 96, arginine 106, arginine 134, and aspartate 224. Residues aspartate 224, aspartate 248, and aspartate 252 each contribute to the Mg(2+) site. 282-294 contacts NAD(+); sequence GSAPDIAGKGMAN.

The protein belongs to the isocitrate and isopropylmalate dehydrogenases family. LeuB type 1 subfamily. As to quaternary structure, homodimer. Mg(2+) is required as a cofactor. Requires Mn(2+) as cofactor.

The protein localises to the cytoplasm. The enzyme catalyses (2R,3S)-3-isopropylmalate + NAD(+) = 4-methyl-2-oxopentanoate + CO2 + NADH. It functions in the pathway amino-acid biosynthesis; L-leucine biosynthesis; L-leucine from 3-methyl-2-oxobutanoate: step 3/4. Functionally, catalyzes the oxidation of 3-carboxy-2-hydroxy-4-methylpentanoate (3-isopropylmalate) to 3-carboxy-4-methyl-2-oxopentanoate. The product decarboxylates to 4-methyl-2 oxopentanoate. The chain is 3-isopropylmalate dehydrogenase (leuB) from Bacillus subtilis (strain 168).